We begin with the raw amino-acid sequence, 194 residues long: WASH complex subunit 3 (194 aa).

M1 is subject to N-acetylmethionine. The stretch at 46 to 74 (TVCEEKLADLSLRIQQIETTLNILDAKLS) forms a coiled coil. Residues 98 to 123 (THSEATSEQSQQNSLQDSGPQESEVT) show a composition bias toward polar residues. 2 disordered regions span residues 98–125 (THSE…VTPE) and 158–194 (SEGL…SFSD).

The protein belongs to the CCDC53 family. Component of the WASH core complex also described as WASH regulatory complex (SHRC) composed of WASHC1, WASHC2, WASHC3, WASHC4 and WASHC5. The WASH core complex associates via WASHC2 with the F-actin-capping protein dimer (formed by CAPZA1, CAPZA2 or CAPZA3 and CAPZB) in a transient or substoichiometric manner which was initially described as WASH complex.

It is found in the early endosome. Its function is as follows. Acts as a component of the WASH core complex that functions as a nucleation-promoting factor (NPF) at the surface of endosomes, where it recruits and activates the Arp2/3 complex to induce actin polymerization, playing a key role in the fission of tubules that serve as transport intermediates during endosome sorting. This chain is WASH complex subunit 3, found in Bos taurus (Bovine).